The chain runs to 361 residues: Chorismate synthase (361 aa).

Residues Arg-48 and Arg-54 each contribute to the NADP(+) site. Residues 125 to 127 (RSS), 238 to 239 (NA), Gly-278, 293 to 297 (KPTSS), and Arg-319 each bind FMN.

Belongs to the chorismate synthase family. As to quaternary structure, homotetramer. FMNH2 serves as cofactor.

The catalysed reaction is 5-O-(1-carboxyvinyl)-3-phosphoshikimate = chorismate + phosphate. Its pathway is metabolic intermediate biosynthesis; chorismate biosynthesis; chorismate from D-erythrose 4-phosphate and phosphoenolpyruvate: step 7/7. Catalyzes the anti-1,4-elimination of the C-3 phosphate and the C-6 proR hydrogen from 5-enolpyruvylshikimate-3-phosphate (EPSP) to yield chorismate, which is the branch point compound that serves as the starting substrate for the three terminal pathways of aromatic amino acid biosynthesis. This reaction introduces a second double bond into the aromatic ring system. This is Chorismate synthase from Salmonella paratyphi A (strain ATCC 9150 / SARB42).